The following is a 468-amino-acid chain: Trehalose-2-sulfate acyltransferase PapA2 (468 aa).

Belongs to the PapA acyltransferase family.

The catalysed reaction is 2-O-sulfo-alpha,alpha-trehalose + hexadecanoyl-CoA = 2-O-sulfo-2'-O-hexadecanoyl-alpha,alpha-trehalose + CoA. Functionally, catalyzes the acylation of trehalose-2-sulfate by adding the palmitoyl group at the 2'-position to yield the intermediate trehalose-2-sulfate-2'-palmitate (SL659). This is Trehalose-2-sulfate acyltransferase PapA2 (papA2) from Mycobacterium tuberculosis (strain ATCC 25177 / H37Ra).